Consider the following 276-residue polypeptide: F420-dependent methylenetetrahydromethanopterin dehydrogenase (276 aa).

The interval 253 to 276 is disordered; that stretch reads TVLRTPHGKEGKTLSKKDLLAKPE. The segment covering 259 to 276 has biased composition (basic and acidic residues); it reads HGKEGKTLSKKDLLAKPE.

This sequence belongs to the MTD family. As to quaternary structure, found to be tightly associated with methyl-coenzyme M methylreductase.

The catalysed reaction is 5,10-methylenetetrahydromethanopterin + oxidized coenzyme F420-(gamma-L-Glu)(n) + 2 H(+) = 5,10-methenyl-5,6,7,8-tetrahydromethanopterin + reduced coenzyme F420-(gamma-L-Glu)(n). The protein operates within one-carbon metabolism; methanogenesis from CO(2); 5,10-methylene-5,6,7,8-tetrahydromethanopterin from 5,10-methenyl-5,6,7,8-tetrahydromethanopterin (coenzyme F420 route): step 1/1. Activity requires salt; 100 mM sodium or potassium salts of chloride, phosphate or sulfate are equally effective. Not inactivated by O(2). Inhibited by hydrogen-producing 5,10-methenyltetrahydromethanopterin hydrogenase which has a higher affinity for their shared substrate. Enzyme is O(2)-stable and strictly dependent on coenzyme F420. Its function is as follows. Catalyzes the reversible reduction of methenyl-H(4)MPT(+) to methylene-H(4)MPT. In Methanothermobacter marburgensis (strain ATCC BAA-927 / DSM 2133 / JCM 14651 / NBRC 100331 / OCM 82 / Marburg) (Methanobacterium thermoautotrophicum), this protein is F420-dependent methylenetetrahydromethanopterin dehydrogenase.